Reading from the N-terminus, the 163-residue chain is Peptide methionine sulfoxide reductase MsrA (163 aa).

Residue C10 is part of the active site.

This sequence belongs to the MsrA Met sulfoxide reductase family.

The catalysed reaction is L-methionyl-[protein] + [thioredoxin]-disulfide + H2O = L-methionyl-(S)-S-oxide-[protein] + [thioredoxin]-dithiol. The enzyme catalyses [thioredoxin]-disulfide + L-methionine + H2O = L-methionine (S)-S-oxide + [thioredoxin]-dithiol. Functionally, has an important function as a repair enzyme for proteins that have been inactivated by oxidation. Catalyzes the reversible oxidation-reduction of methionine sulfoxide in proteins to methionine. The protein is Peptide methionine sulfoxide reductase MsrA of Vesicomyosocius okutanii subsp. Calyptogena okutanii (strain HA).